The sequence spans 848 residues: MSPGYLPAPKAVLGSVPEKHLAEEDEVDSILLSASKILNSSEGVKESGGNEPEYGCASEPENQIQPQSALKVLQHQLESFQALRMQTLQNVSMVQSEISEILNKSIVEVETPQFNSEKSLVFSMHPEKDLPNETQEEIPSTKTLHSMGETFSSNSDTGLPQGTDIPPQIQVKDMLALQGLRTTADNSPPKKAMNTSEQPSATKSFSLYQFLPQGPQTAVPQAAPVILDKSTITTPFPKHGFCANLDDICHSIKHMKEELQKSHDKELALTSELHTFQADASTQGHHKHEPFPMHSSKLNFIQQENMEGNLSEDMKSKRISELEALVSKLLPLRDTVSKLHVNFCRKCKKLSKSEVYRGKKNEKNKDIPITSKNIMDLKFHSRAPRYTLSVLDLGKHKIKDKEGQAFIVSQGPATLENEKLPKGKFIPEQCVPKQSVAKIHYLQNYLKESLQNQKKMTELENENLALKTKMKPLVFTAQSLIQKVEAHEKQLKSLAEEKSALQSKLSKAEEENKDCLRELKKIVSTYNVLGGQHKMLEEKNSQLSLEKQQMLETIDHLKSKEHKSQSDMAVLQNENSRMNIEIEAMKTSMLLVQDEREMLEKETYQLLKDKSTLESDLKESKLEILQLKEKERLIKAEQESLLHSLDTAKAEKLSLEATLQESTSTRQKLERKLVDIQAYQSAAEEKFLKEIKSAKSETSIYKNNLAEISKECEILSKMVMEIKADNQILKEELKKHSQENTKFENSISRLTEDKILLENYVRSIENEKDTLEFEMRNLQRDYLSLSDKVSSQNNSASKSTYISRREKLYFDNYDAYEDASSLRNRPVASDLKGIPHKLYQRLPSKICK.

Residues 41–62 are disordered; that stretch reads SEGVKESGGNEPEYGCASEPEN. A coiled-coil region spans residues 442 to 794; sequence LQNYLKESLQ…LSDKVSSQNN (353 aa). Phosphoserine is present on Ser-620.

It localises to the nucleus. The protein is Coiled-coil domain-containing protein 110 (Ccdc110) of Mus musculus (Mouse).